The sequence spans 438 residues: Glutamyl-tRNA reductase (438 aa).

Substrate-binding positions include 49–52, Ser109, 114–116, and Gln120; these read TCNR and EGQ. Cys50 serves as the catalytic Nucleophile. An NADP(+)-binding site is contributed by 197–202; it reads GAGKMS.

The protein belongs to the glutamyl-tRNA reductase family. As to quaternary structure, homodimer.

The enzyme catalyses (S)-4-amino-5-oxopentanoate + tRNA(Glu) + NADP(+) = L-glutamyl-tRNA(Glu) + NADPH + H(+). It participates in porphyrin-containing compound metabolism; protoporphyrin-IX biosynthesis; 5-aminolevulinate from L-glutamyl-tRNA(Glu): step 1/2. It functions in the pathway porphyrin-containing compound metabolism; chlorophyll biosynthesis. Catalyzes the NADPH-dependent reduction of glutamyl-tRNA(Glu) to glutamate 1-semialdehyde (GSA). The chain is Glutamyl-tRNA reductase from Synechococcus elongatus (strain ATCC 33912 / PCC 7942 / FACHB-805) (Anacystis nidulans R2).